The sequence spans 182 residues: Large ribosomal subunit protein uL6 (182 aa).

It belongs to the universal ribosomal protein uL6 family. Part of the 50S ribosomal subunit.

Functionally, this protein binds to the 23S rRNA, and is important in its secondary structure. It is located near the subunit interface in the base of the L7/L12 stalk, and near the tRNA binding site of the peptidyltransferase center. This chain is Large ribosomal subunit protein uL6, found in Nostoc sp. (strain PCC 7120 / SAG 25.82 / UTEX 2576).